The chain runs to 70 residues: Large ribosomal subunit protein bL31 (70 aa).

Zn(2+)-binding residues include cysteine 16, cysteine 18, cysteine 37, and cysteine 40.

It belongs to the bacterial ribosomal protein bL31 family. Type A subfamily. In terms of assembly, part of the 50S ribosomal subunit. Zn(2+) serves as cofactor.

Its function is as follows. Binds the 23S rRNA. The protein is Large ribosomal subunit protein bL31 of Actinobacillus pleuropneumoniae serotype 5b (strain L20).